Reading from the N-terminus, the 316-residue chain is Protein lifeguard 2 (316 aa).

Residues 1 to 49 (MTQGKLSVANKAPGTEGQQQANGEKKDAPAVPSAPPSYEEATSGEGLKA) form a disordered region. The next 3 membrane-spanning stretches (helical) occupy residues 106–126 (VYTI…LFTF), 138–158 (PGWY…LACC), and 165–185 (FPWN…LTGM). A glycan (N-linked (GlcNAc...) asparagine) is linked at N191. 4 consecutive transmembrane segments (helical) span residues 194–214 (SVLL…IFSF), 225–245 (GVLF…AILL), 251–271 (PWLH…FLAF), and 290–310 (IFGA…FLQL).

Belongs to the BI1 family. LFG subfamily. As to quaternary structure, interacts with FAS/TNFRSF6 and BAX. As to expression, expressed at high levels on dendrites and to a lesser extent on the soma and axons of neurons in various regions of brain.

The protein resides in the cell membrane. Its subcellular location is the membrane raft. It localises to the postsynaptic cell membrane. Functionally, antiapoptotic protein which protects cells uniquely from Fas-induced apoptosis. Regulates Fas-mediated apoptosis in neurons by interfering with caspase-8 activation. Plays a role in cerebellar development by affecting cerebellar size, internal granular layer (IGL) thickness, and Purkinje cell (PC) development. The sequence is that of Protein lifeguard 2 (Faim2) from Rattus norvegicus (Rat).